A 345-amino-acid chain; its full sequence is Phosphoribosylformylglycinamidine cyclo-ligase (345 aa).

Belongs to the AIR synthase family.

It is found in the cytoplasm. It catalyses the reaction 2-formamido-N(1)-(5-O-phospho-beta-D-ribosyl)acetamidine + ATP = 5-amino-1-(5-phospho-beta-D-ribosyl)imidazole + ADP + phosphate + H(+). The protein operates within purine metabolism; IMP biosynthesis via de novo pathway; 5-amino-1-(5-phospho-D-ribosyl)imidazole from N(2)-formyl-N(1)-(5-phospho-D-ribosyl)glycinamide: step 2/2. This is Phosphoribosylformylglycinamidine cyclo-ligase from Shewanella putrefaciens (strain CN-32 / ATCC BAA-453).